Consider the following 309-residue polypeptide: Epidermal retinol dehydrogenase 2 (309 aa).

The helical transmembrane segment at 11–31 threads the bilayer; sequence LFIFLGKSLFSLLEAMIFALL. 44-68 contacts NADP(+); the sequence is LITGAGSGLGRLLALQFARLGSVLV. Ser-177 is a binding site for substrate. The active-site Proton acceptor is the Tyr-190. A helical transmembrane segment spans residues 270 to 290; that stretch reads LLYFMMFLKSFLPLKTGLLIA.

This sequence belongs to the short-chain dehydrogenases/reductases (SDR) family. As to expression, detected in adult lung. Detected at low levels in adult brain, heart, testis, placenta, cervix, pancreas, uterus, stomach, rectum, small intestine, colon, esophagus, thymus, skin, and skin keratinocyte. Expression is higher in psoriasis lesions relative to unaffected skin from psoriasis patients. Detected in fetal kidney, skin and lung.

Its subcellular location is the endoplasmic reticulum membrane. It carries out the reaction all-trans-retinol--[retinol-binding protein] + NAD(+) = all-trans-retinal--[retinol-binding protein] + NADH + H(+). The protein operates within cofactor metabolism; retinol metabolism. Oxidoreductase with strong preference for NAD. Active in both the oxidative and reductive directions. Oxidizes all-trans-retinol in all-trans-retinaldehyde. No activity was detected with 11-cis-retinol or 11-cis-retinaldehyde as substrates with either NAD(+)/NADH or NADP(+)/NADPH. The polypeptide is Epidermal retinol dehydrogenase 2 (Homo sapiens (Human)).